Consider the following 122-residue polypeptide: NADH-quinone oxidoreductase subunit A (122 aa).

The next 3 membrane-spanning stretches (helical) occupy residues 10–30 (LIIF…LTAG), 67–87 (FALL…WAVV), and 91–111 (LGLF…IGLI).

Belongs to the complex I subunit 3 family. NDH-1 is composed of 14 different subunits. Subunits NuoA, H, J, K, L, M, N constitute the membrane sector of the complex.

Its subcellular location is the cell membrane. The catalysed reaction is a quinone + NADH + 5 H(+)(in) = a quinol + NAD(+) + 4 H(+)(out). Functionally, NDH-1 shuttles electrons from NADH, via FMN and iron-sulfur (Fe-S) centers, to quinones in the respiratory chain. The immediate electron acceptor for the enzyme in this species is believed to be a menaquinone. Couples the redox reaction to proton translocation (for every two electrons transferred, four hydrogen ions are translocated across the cytoplasmic membrane), and thus conserves the redox energy in a proton gradient. The chain is NADH-quinone oxidoreductase subunit A from Geobacillus kaustophilus (strain HTA426).